Reading from the N-terminus, the 215-residue chain is Thiamine-phosphate synthase 1 (215 aa).

Residues 35–39 (QYRFE) and Asn-67 each bind 4-amino-2-methyl-5-(diphosphooxymethyl)pyrimidine. Residues Asp-68 and Asp-87 each contribute to the Mg(2+) site. 4-amino-2-methyl-5-(diphosphooxymethyl)pyrimidine is bound at residue Thr-106. Residue 132–134 (TST) participates in 2-[(2R,5Z)-2-carboxy-4-methylthiazol-5(2H)-ylidene]ethyl phosphate binding. Residue Lys-135 coordinates 4-amino-2-methyl-5-(diphosphooxymethyl)pyrimidine. Gly-162 provides a ligand contact to 2-[(2R,5Z)-2-carboxy-4-methylthiazol-5(2H)-ylidene]ethyl phosphate.

Belongs to the thiamine-phosphate synthase family. The cofactor is Mg(2+).

The catalysed reaction is 2-[(2R,5Z)-2-carboxy-4-methylthiazol-5(2H)-ylidene]ethyl phosphate + 4-amino-2-methyl-5-(diphosphooxymethyl)pyrimidine + 2 H(+) = thiamine phosphate + CO2 + diphosphate. It catalyses the reaction 2-(2-carboxy-4-methylthiazol-5-yl)ethyl phosphate + 4-amino-2-methyl-5-(diphosphooxymethyl)pyrimidine + 2 H(+) = thiamine phosphate + CO2 + diphosphate. The enzyme catalyses 4-methyl-5-(2-phosphooxyethyl)-thiazole + 4-amino-2-methyl-5-(diphosphooxymethyl)pyrimidine + H(+) = thiamine phosphate + diphosphate. The protein operates within cofactor biosynthesis; thiamine diphosphate biosynthesis; thiamine phosphate from 4-amino-2-methyl-5-diphosphomethylpyrimidine and 4-methyl-5-(2-phosphoethyl)-thiazole: step 1/1. In terms of biological role, condenses 4-methyl-5-(beta-hydroxyethyl)thiazole monophosphate (THZ-P) and 2-methyl-4-amino-5-hydroxymethyl pyrimidine pyrophosphate (HMP-PP) to form thiamine monophosphate (TMP). The chain is Thiamine-phosphate synthase 1 from Aquifex aeolicus (strain VF5).